The primary structure comprises 66 residues: Large ribosomal subunit protein bL33c (66 aa).

This sequence belongs to the bacterial ribosomal protein bL33 family.

Its subcellular location is the plastid. It is found in the chloroplast. The polypeptide is Large ribosomal subunit protein bL33c (Carica papaya (Papaya)).